The sequence spans 267 residues: 2-keto-3-deoxy-L-rhamnonate aldolase (267 aa).

His49 (proton acceptor) is an active-site residue. Substrate is bound at residue Gln151. Glu153 is a binding site for Mg(2+). Residues Ala178 and Asp179 each coordinate substrate. Asp179 is a binding site for Mg(2+).

It belongs to the HpcH/HpaI aldolase family. KDR aldolase subfamily. Homohexamer. It depends on Mg(2+) as a cofactor.

The enzyme catalyses 2-dehydro-3-deoxy-L-rhamnonate = (S)-lactaldehyde + pyruvate. In terms of biological role, catalyzes the reversible retro-aldol cleavage of 2-keto-3-deoxy-L-rhamnonate (KDR) to pyruvate and lactaldehyde. This Salmonella paratyphi A (strain ATCC 9150 / SARB42) protein is 2-keto-3-deoxy-L-rhamnonate aldolase.